The chain runs to 188 residues: Early nodulin-like protein 5 (188 aa).

A signal peptide spans 1–24 (MDSSKKIIIVMFLVTFYMFSCVSS). Positions 25 to 128 (TEFEVGGENG…GQKMIVKVME (104 aa)) constitute a Phytocyanin domain. An intrachain disulfide couples Cys82 to Cys116. Positions 127–157 (METESSTESPPPSSSSSSSSSSSLPASTPKA) are disordered. Residues 129-155 (TESSTESPPPSSSSSSSSSSSLPASTP) show a composition bias toward low complexity. Ser170 carries the GPI-anchor amidated serine lipid modification. Positions 171-188 (SSGFVVSAVLIVSVFGLV) are cleaved as a propeptide — removed in mature form.

The protein belongs to the early nodulin-like (ENODL) family. In terms of tissue distribution, mostly expressed in leaves and flowers, and, to a lower extent, in stems.

The protein resides in the cell membrane. Functionally, may act as a carbohydrate transporter. Mainly required for reproductive functions. This is Early nodulin-like protein 5 from Arabidopsis thaliana (Mouse-ear cress).